The sequence spans 410 residues: Dipeptidase ataJ (410 aa).

Positions 27, 29, and 138 each coordinate Zn(2+). A substrate-binding site is contributed by His-165. The tract at residues 180–200 (TSSPWSEYGGQTHDPGDEPSR) is disordered. Residues Arg-258 and Asp-318 each coordinate substrate.

This sequence belongs to the metallo-dependent hydrolases superfamily. Peptidase M19 family. The cofactor is Zn(2+).

It catalyses the reaction an L-aminoacyl-L-amino acid + H2O = 2 an L-alpha-amino acid. Its pathway is mycotoxin biosynthesis. Functionally, dipeptidase; part of the gene cluster that mediates the biosynthesis of acetylaranotin, a member of the epipolythiodioxopiperazine (ETP) class of toxins characterized by a disulfide-bridged cyclic dipeptide. The first step of acetylaranotin biosynthesis is performed by the NRPS ataP which produces diketopiperazine cyclo-L-Phe-L-Phe via the condensation of 2 phenylalanines (L-Phe). The ataC domain of ataTC then catalyzes the formation of bishydroxylation of cyclo-L-Phe-L-Phe. The glutathione S-transferase domain ataG in ataIMG further catalyzes the conjugation of two glutathiones to the bishydroxylated intermediate. Next, the dipeptidase ataJ removes the Glu residues. The following step is performed by the carbon sulfur lyase domain ataI of ataIMG which may convert the bis-cysteinyl adduct to yield an epidithiol intermediate. The ataT domain from ataTC then catalyzes the oxidation of the free dithiols, followed by a cyclization step catalyzed by the cytochrome P450 ataF. AtaF probably acts as an epoxidase to promote a dual epoxidation formation at C8 and C9 along with C8' and C9', followed by the spontaneous nucleophilic attack of the amide nitrogens N10 and N10' to yield an intermediate with the pyrrolidine partial structure. The final steps of acetylaranotin biosynthesis involve the acetylation and ring rearrangement of an epitetrathiodiketopiperazine intermediate to produce acetylaranotin. AtaH probably catalyzes the acetylation of epitetrathiodiketopiperazine to produce a diacetate and ataY is responsible for the formation of the dihydrooxepin moiety that converts the diacetate intermediate to acetylaranotin via acetylapoaranotin. Both enzymes could function independently in the absence of the other. The acetylaranotin bis-thiomethyltransferase ataS located outside of acetylaranotin gene cluster is the main thiomethyltransferase responsible for converting acetylaranotin and its related intermediates to their methylated forms. This Aspergillus terreus (strain NIH 2624 / FGSC A1156) protein is Dipeptidase ataJ.